The chain runs to 217 residues: Somatotropin (217 aa).

The signal sequence occupies residues 1–26 (MATGSHTTTLLLAVALLGLPWPQEAG). Zn(2+) is bound at residue H46. Cysteines 79 and 190 form a disulfide. E199 serves as a coordination point for Zn(2+). Residues C207 and C215 are joined by a disulfide bond.

The protein belongs to the somatotropin/prolactin family.

The protein localises to the secreted. Functionally, plays an important role in growth control. Its major role in stimulating body growth is to stimulate the liver and other tissues to secrete IGF1. It stimulates both the differentiation and proliferation of myoblasts. It also stimulates amino acid uptake and protein synthesis in muscle and other tissues. This Galago senegalensis (Northern lesser bushbaby) protein is Somatotropin (GH1).